Consider the following 515-residue polypeptide: Alpha-1B adrenergic receptor (515 aa).

Over 1–45 (MNPDLDTGHNTSAPAQWGELKDANFTGPNQTSSNSTLPQLDVTRA) the chain is Extracellular. Asn10, Asn24, and Asn34 each carry an N-linked (GlcNAc...) asparagine glycan. Residues 46–70 (ISVGLVLGAFILFAIVGNILVILSV) traverse the membrane as a helical segment. Residues 71-83 (ACNRHLRTPTNYF) are Cytoplasmic-facing. Residues 84-105 (IVNLAIADLLLSFTVLPFSATL) traverse the membrane as a helical segment. The Extracellular portion of the chain corresponds to 106-115 (EVLGYWVLGR). A helical membrane pass occupies residues 116-141 (IFCDIWAAVDVLCCTASILSLCAISI). Cysteines 118 and 195 form a disulfide. The Cytoplasmic portion of the chain corresponds to 142 to 161 (DRYIGVRYSLQYPTLVTRRK). Residues 162–184 (AILALLSVWVLSTVISIGPLLGW) form a helical membrane-spanning segment. Over 185–201 (KEPAPNDDKECGVTEEP) the chain is Extracellular. A helical membrane pass occupies residues 202 to 224 (FYALFSSLGSFYIPLAVILVMYC). At 225 to 295 (RVYIVAKRTT…FSREKKAAKT (71 aa)) the chain is on the cytoplasmic side. The residue at position 264 (Thr264) is a Phosphothreonine. A helical transmembrane segment spans residues 296-319 (LGIVVGMFILCWLPFFIALPLGSL). The Extracellular portion of the chain corresponds to 320–326 (FSTLKPP). The helical transmembrane segment at 327 to 351 (DAVFKVVFWLGYFNSCLNPIIYPCS) threads the bilayer. Over 352–515 (SKEFKRAFMR…SNMPLAPGHF (164 aa)) the chain is Cytoplasmic. Cys365 carries the S-palmitoyl cysteine lipid modification. The Nuclear localization signal signature appears at 368–378 (RSGRRRRRRRR). Disordered regions lie at residues 392–428 (GGSL…SPGY) and 473–515 (LLGE…PGHF). The segment covering 410–424 (SCMSGSQRTLPSASP) has biased composition (polar residues).

It belongs to the G-protein coupled receptor 1 family. Adrenergic receptor subfamily. ADRA1B sub-subfamily. Homo- and heterooligomer. Heterooligomerizes with ADRA1B homooligomers in cardiac myocytes. Interacts with CAVIN4.

It localises to the nucleus membrane. The protein localises to the cell membrane. The protein resides in the cytoplasm. It is found in the membrane. Its subcellular location is the caveola. Its function is as follows. This alpha-adrenergic receptor mediates its action by association with G proteins that activate a phosphatidylinositol-calcium second messenger system. Its effect is mediated by G(q) and G(11) proteins. Nuclear ADRA1A-ADRA1B heterooligomers regulate phenylephrine (PE)-stimulated ERK signaling in cardiac myocytes. The polypeptide is Alpha-1B adrenergic receptor (ADRA1B) (Mesocricetus auratus (Golden hamster)).